The following is a 1773-amino-acid chain: MDSDSERASLESIKDNSECVHVSNEPNLTATCVDSSVGEEGVTDVNSSAAVSELVPPEQGEGALLNSVPEISERGIPVDVVSSVDGGGEENAAFNIQEIDSVGGDAAAVEEVPLKSSSVVGEGREEEAGASIVKEEDFVAEANLSGDRLEENKEVSMEEEPSSHELSVCEVNGVDSLNDEENREVGEQIVCGSMGGEEIESDLESKKEKVDVIEEETTAQAASLVNAIEIPDDKEVACVAGFTEISSQDKGLDESGNGFLDEEPVKELQIGEGAKDLTDGDAKEGVDVTEDEMDIQVLKKSKEEEKVDSTTELEIETMRLEVHDVATEMSDKTVISSAVVTQFTGETSNDKETVMDDVKEDVDKDSEAGKSLDIHVPEATEEVDTDVNYGVGIEKEGDGVGGAEEAGQTVDLEEIREENQELSKELAQVDETKISEMSEVTETMIKDEDQEKDDNMTDLAEDVENHRDSSVADIEEGREDHEDMGVTETQKETVLGKVDRTKIAEVSEETDTRIEDEDQEKDDEMTDVAEDVKTHGDSSVADIEEGRESQEEMTETQEDSVMADEEPEEVEEENKSAGGKRKRGRNTKTVKGTGKKKEEDVCFMCFDGGDLVLCDRRGCTKAYHPSCVDRDEAFFQTKGKWNCGWHLCSKCEKTATYLCYTCMFSLCKGCAKDAVFFCIRGNKGLCETCMETVKLIERKQQEKEPAQLDFNDKTSWEYLFKDYWIDLKTQLSLSPEELDQAKRPLKGHETNASKQGTASETDYVTDGGSDSDSSPKKRKTRSRSKSGSAEKILSSGDKNLSDETMEWASKELLDLVVHMRRGDRSFLPMLEVQTLLLAYIKRYNLRDPRRKSQVICDSRLQNLFGKSHVGHFEMLNLLDSHFLKKEQNQADDIQGDIVDTEEPNHVDVDENLDHPVKSGKDKKRKTRKKNVRKGRQSNLDDFAAVDMHNINLIYLRRSLVEDLLEDSTAFEEKVASAFVRLRISGNQKQDLYRLVQVVGTSKAPEPYKVGKKTTDYVLEILNLDKTEVISIDIISNQDFTEDECKRLKQSIKCGLINRLTVGDIQEKAIALQEVRVKNLLEAEILRFSHLRDRASDMGRRKEYPYLLKLSNSLTMLTLRECVEKLQLLKSPEERQRRLEEIPEIHADPKMDPDCESEDEDEKEEKEKEKQLRPRSSSFNRRGRDPISPRKGGFSSNESWTGTSNYSNTSANRELSRSYSGRGSTGRGDYLGSSDDKVSDSMWTSAREREVQPSLGSEKPRSVSIPETPARSSRAIAPPELSPRIASEISMAPPAVVSQPVPKSNDSEKIWHYKDPSGKVQGPFSMAQLRKWNNTGYFPAKLEIWKANESPLDSVLLTDALAGLFQKQTQAVDNSYMKAQVAAFSGQSSQSEPNLGFAARIAPTTIEIPRNSQDTWSQGGSLPSPTPNQITTPTAKRRNFESRWSPTKPSPQSANQSMNYSVAQSGQSQTSRIDIPVVVNSAGALQPQTYPIPTPDPINVSVNHSATLHSPTPAGGKQSWGSMQTDHGGSNTPSSQNNSTSYGTPSPSVLPSQSQPGFPPSDSWKVAVPSQPNAQAQAQWGMNMVNNNQNSAQPQAPANQNSSWGQGTVNPNMGWVGPAQTGVNVNWGGSSVPSTVQGITHSGWVAPVQGQTQAYPNPGWGPTGHPQSQSQSQVQAQAGTTGSGWMQPGQGIQSGNSNQNWGTQNQTAIPSGGSGGNQAGYWGNQQQSQNGDSGYGWNRQSGGQQNNFKGQRVCKFFRENGHCRKGASCNYLHN.

Residues 145 to 166 form a disordered region; that stretch reads SGDRLEENKEVSMEEEPSSHEL. Positions 147–156 are enriched in basic and acidic residues; that stretch reads DRLEENKEVS. A coiled-coil region spans residues 196-218; sequence GEEIESDLESKKEKVDVIEEETT. 3 disordered regions span residues 270-290, 361-409, and 434-591; these read IGEG…DVTE, DVDK…AGQT, and ISEM…KTVK. 2 stretches are compositionally biased toward basic and acidic residues: residues 273–286 and 361–378; these read GAKD…KEGV and DVDK…HVPE. The stretch at 403–437 forms a coiled coil; it reads AEEAGQTVDLEEIREENQELSKELAQVDETKISEM. 2 stretches are compositionally biased toward basic and acidic residues: residues 444–455 and 497–513; these read MIKDEDQEKDDN and KVDR…TDTR. Acidic residues-rich tracts occupy residues 514–529 and 551–572; these read IEDE…TDVA and EEMT…EVEE. The segment covering 578–588 has biased composition (basic residues); it reads GGKRKRGRNTK. Positions 581 to 588 match the Nuclear localization signal 1 motif; sequence RKRGRNTK. The PHD-type zinc finger occupies 599–665; that stretch reads EDVCFMCFDG…TYLCYTCMFS (67 aa). Positions 741 to 751 are enriched in basic and acidic residues; it reads AKRPLKGHETN. The interval 741-797 is disordered; sequence AKRPLKGHETNASKQGTASETDYVTDGGSDSDSSPKKRKTRSRSKSGSAEKILSSGD. A compositionally biased stretch (polar residues) spans 752 to 762; that stretch reads ASKQGTASETD. Positions 801 to 884 constitute an SWIB/MDM2 domain; that stretch reads SDETMEWASK…LNLLDSHFLK (84 aa). Positions 903-919 are enriched in basic and acidic residues; it reads PNHVDVDENLDHPVKSG. Residues 903–935 form a disordered region; sequence PNHVDVDENLDHPVKSGKDKKRKTRKKNVRKGR. The span at 920–935 shows a compositional bias: basic residues; that stretch reads KDKKRKTRKKNVRKGR. The Nuclear localization signal 2 signature appears at 921-928; that stretch reads DKKRKTRK. Residues 944–1076 form the Plus3 domain; sequence AVDMHNINLI…KAIALQEVRV (133 aa). Residues 1139-1152 show a composition bias toward basic and acidic residues; that stretch reads EEIPEIHADPKMDP. Positions 1139 to 1274 are disordered; that stretch reads EEIPEIHADP…PETPARSSRA (136 aa). The span at 1153–1163 shows a compositional bias: acidic residues; the sequence is DCESEDEDEKE. Polar residues predominate over residues 1193–1212; that stretch reads FSSNESWTGTSNYSNTSANR. Position 1281 is a phosphoserine (S1281). The GYF domain maps to 1307–1361; the sequence is EKIWHYKDPSGKVQGPFSMAQLRKWNNTGYFPAKLEIWKANESPLDSVLLTDALA. 4 stretches are compositionally biased toward polar residues: residues 1409-1433, 1441-1469, 1499-1509, and 1518-1528; these read RNSQ…TTPT, SRWS…QSQT, VSVNHSATLHS, and SWGSMQTDHGG. 3 disordered regions span residues 1409–1469, 1485–1605, and 1649–1746; these read RNSQ…QSQT, QPQT…SWGQ, and GQTQ…QQNN. Residues 1529–1555 are compositionally biased toward low complexity; sequence SNTPSSQNNSTSYGTPSPSVLPSQSQP. The span at 1569–1579 shows a compositional bias: polar residues; the sequence is SQPNAQAQAQW. Low complexity-rich tracts occupy residues 1585–1602 and 1666–1677; these read NNNQ…QNSS and QSQSQSQVQAQA. A compositionally biased stretch (polar residues) spans 1678–1708; it reads GTTGSGWMQPGQGIQSGNSNQNWGTQNQTAI. The span at 1722–1735 shows a compositional bias: low complexity; it reads GNQQQSQNGDSGYG. Residues 1737–1746 are compositionally biased toward polar residues; sequence NRQSGGQQNN. A C3H1-type zinc finger spans residues 1747-1773; it reads FKGQRVCKFFRENGHCRKGASCNYLHN.

Interacts with unmethylated histone H3 and AGO2. The interaction with AGO2 in required to direct DNA methylation and silencing. Expressed in seedlings, mostly in the vasculature and shoot apices of young seedlings.

It is found in the nucleus. Its function is as follows. Plays a central role in integrating RNA silencing and chromatin signals in 21 nt siRNA-dependent DNA methylation on cytosine pathway leading to transcriptional gene silencing of specific sequences. Involved in a chromatin-based RNA silencing pathway that encompasses both post-transcriptional gene silencing (PTGS) (e.g. RDR1, RDR6 and AGO2) and transcriptional gene silencing (TGS) (e.g. siRNA-dependent DNA methylation and histone H3) components. Mediates siRNA accumulation at specific chromatin loci. Binds H3K4me0 through its PHD to enforce low levels of H3K4 methylation and gene silencing at a subset of genomic loci. This is Zinc finger CCCH domain-containing protein 19 (NERD) from Arabidopsis thaliana (Mouse-ear cress).